We begin with the raw amino-acid sequence, 519 residues long: O-fucosyltransferase 1 (519 aa).

Topologically, residues 1–24 (MRRLGHHRLHGKTGGVGTKGMVAK) are cytoplasmic. A helical; Signal-anchor for type II membrane protein transmembrane segment spans residues 25–45 (LSIGVIVLLICTLSLLFSANI). Topologically, residues 46 to 519 (GSNREPTRPS…TNSTVTGLER (474 aa)) are lumenal. The tract at residues 67–86 (KSGGWRPSSAPRSDWPPPTK) is disordered. Asn-118 is a glycosylation site (N-linked (GlcNAc...) asparagine). 260-262 (HLR) serves as a coordination point for substrate. 3 N-linked (GlcNAc...) asparagine glycosylation sites follow: Asn-327, Asn-357, and Asn-511. The tract at residues 497–519 (RLESIRDPDSTSQTNSTVTGLER) is disordered. Residues 506–519 (STSQTNSTVTGLER) show a composition bias toward polar residues.

Belongs to the glycosyltransferase GT106 family.

It is found in the golgi apparatus membrane. Its pathway is glycan metabolism. The chain is O-fucosyltransferase 1 from Arabidopsis thaliana (Mouse-ear cress).